Consider the following 251-residue polypeptide: ATP synthase subunit a (251 aa).

A run of 7 helical transmembrane segments spans residues 28 to 48 (FTQS…IIAL), 63 to 80 (LVEI…EQIG), 86 to 106 (FFPF…LGLF), 115 to 135 (HVAV…AVAL), 154 to 176 (ALAP…SLSI), 195 to 215 (FMFL…LLPM), and 219 to 239 (VTLV…FAIL).

Belongs to the ATPase A chain family. In terms of assembly, F-type ATPases have 2 components, CF(1) - the catalytic core - and CF(0) - the membrane proton channel. CF(1) has five subunits: alpha(3), beta(3), gamma(1), delta(1), epsilon(1). CF(0) has three main subunits: a(1), b(2) and c(9-12). The alpha and beta chains form an alternating ring which encloses part of the gamma chain. CF(1) is attached to CF(0) by a central stalk formed by the gamma and epsilon chains, while a peripheral stalk is formed by the delta and b chains.

The protein localises to the cell inner membrane. Key component of the proton channel; it plays a direct role in the translocation of protons across the membrane. The sequence is that of ATP synthase subunit a from Granulibacter bethesdensis (strain ATCC BAA-1260 / CGDNIH1).